We begin with the raw amino-acid sequence, 587 residues long: Ankyrin repeat and SOCS box protein 14 (587 aa).

11 ANK repeats span residues 81–110 (NGWL…PSTW), 116–145 (NGET…NPNA), 149–178 (EGNS…DVNL), 182–211 (NERT…YPDA), 215–244 (YGFT…DVHS), 248–277 (DSSS…DANI), 281–310 (SGHL…IAAI), 313–342 (SGIS…DVNF), 355–384 (QRKS…LPNQ), 385–414 (DPVN…NVNY), and 416–449 (CRVN…DTER). The region spanning 521-576 (WPEIHFILANPRSLQHLCRLKIRKCMGRLRLRCPVFMSFLPLPNLLKAYVLYKEYD) is the SOCS box domain.

It belongs to the ankyrin SOCS box (ASB) family. In terms of assembly, interacts with MAPRE2; this interaction promotes MAPRE2 degradation.

Its pathway is protein modification; protein ubiquitination. In terms of biological role, may be a substrate-recognition component of a SCF-like ECS (Elongin-Cullin-SOCS-box protein) E3 ubiquitin-protein ligase complex which mediates the ubiquitination and subsequent proteasomal degradation of target proteins. Plays a role in the inhibition of cardiomyocyte nuclear proliferation by mediating the ubiquitination and degradation of MAPRE2. In Mus musculus (Mouse), this protein is Ankyrin repeat and SOCS box protein 14 (Asb14).